The following is a 3423-amino-acid chain: Genome polyprotein (3423 aa).

The disordered stretch occupies residues methionine 1–serine 25. Topologically, residues methionine 1–arginine 104 are cytoplasmic. The hydrophobic; homodimerization of capsid protein C stretch occupies residues leucine 37–valine 72. The propeptide at glycine 105–alanine 122 is ER anchor for capsid protein C, removed in mature form by serine protease NS3. The chain crosses the membrane as a helical span at residues glycine 105–valine 125. Residues threonine 126–asparagine 249 lie on the Extracellular side of the membrane. Asparagine 192 is a glycosylation site (N-linked (GlcNAc...) asparagine; by host). The chain crosses the membrane as a helical span at residues tryptophan 250–glycine 269. The Cytoplasmic segment spans residues serine 270–glutamine 274. Residues lysine 275–serine 290 form a helical membrane-spanning segment. Over isoleucine 291–serine 745 the chain is Extracellular. A Glycyl lysine isopeptide (Lys-Gly) (interchain with G-Cter in ubiquitin) cross-link involves residue lysine 328. Intrachain disulfides connect cysteine 350-cysteine 406 and cysteine 382-cysteine 411. The segment at aspartate 388–glycine 401 is fusion peptide. A glycan (N-linked (GlcNAc...) asparagine; by host) is linked at asparagine 444. 2 disulfides stabilise this stretch: cysteine 480–cysteine 581 and cysteine 598–cysteine 629. A Glycyl lysine isopeptide (Lys-Gly) (interchain with G-Cter in ubiquitin) cross-link involves residue lysine 571. Residues leucine 746 to leucine 767 traverse the membrane as a helical segment. Over asparagine 768 to serine 773 the chain is Cytoplasmic. Residues isoleucine 774–alanine 794 form a helical membrane-spanning segment. The Lumenal portion of the chain corresponds to aspartate 795–lysine 1177. Disulfide bonds link cysteine 798–cysteine 809, cysteine 849–cysteine 937, cysteine 973–cysteine 1017, cysteine 1074–cysteine 1123, cysteine 1085–cysteine 1106, and cysteine 1107–cysteine 1110. 2 N-linked (GlcNAc...) asparagine; by host glycosylation sites follow: asparagine 924 and asparagine 1001. A helical transmembrane segment spans residues isoleucine 1178–serine 1198. Over aspartate 1199–valine 1220 the chain is Cytoplasmic. The helical transmembrane segment at alanine 1221–phenylalanine 1241 threads the bilayer. Residues arginine 1242–aspartate 1270 lie on the Lumenal side of the membrane. A helical membrane pass occupies residues leucine 1271–proline 1291. The Cytoplasmic portion of the chain corresponds to arginine 1292 to asparagine 1295. Residues isoleucine 1296–tryptophan 1316 traverse the membrane as a helical segment. Residues arginine 1317–methionine 1345 are Lumenal-facing. Residues alanine 1346–leucine 1366 form a helical membrane-spanning segment. At threonine 1367 to serine 1373 the chain is on the cytoplasmic side. A helical transmembrane segment spans residues tryptophan 1374 to alanine 1394. At lysine 1395–aspartate 1397 the chain is on the lumenal side. A helical transmembrane segment spans residues isoleucine 1398–glycine 1418. Residues lysine 1419 to lysine 1472 are Cytoplasmic-facing. The interval isoleucine 1425–proline 1464 is interacts with and activates NS3 protease. The disordered stretch occupies residues glycine 1429–aspartate 1451. The segment at residues valine 1473–tryptophan 1493 is an intramembrane region (helical). Over tyrosine 1494–threonine 2170 the chain is Lumenal. Residues serine 1503–cysteine 1680 enclose the Peptidase S7 domain. Catalysis depends on charge relay system; for serine protease NS3 activity residues histidine 1553, aspartate 1577, and serine 1637. Positions proline 1683 to glutamate 1839 constitute a Helicase ATP-binding domain. Positions lysine 1687–glutamine 1690 are important for RNA-binding. Leucine 1696 to threonine 1703 contributes to the ATP binding site. Residues aspartate 1787–histidine 1790 carry the DEAH box motif. Positions proline 1834 to glutamate 2013 constitute a Helicase C-terminal domain. The residue at position 1891 (lysine 1891) is an N6-acetyllysine; by host. The helical transmembrane segment at leucine 2171 to leucine 2191 threads the bilayer. At methionine 2192–lysine 2195 the chain is on the lumenal side. The helical intramembrane region spans glycine 2196 to leucine 2216. Topologically, residues serine 2217 to glutamate 2218 are cytoplasmic. Residues isoleucine 2219–isoleucine 2239 form a helical membrane-spanning segment. Over proline 2240 to alanine 2254 the chain is Lumenal. An intramembrane region (helical) is located at residues isoleucine 2255–alanine 2269. Over asparagine 2270–serine 2307 the chain is Lumenal. The helical intramembrane region spans alanine 2308–threonine 2328. Over threonine 2329–glycine 2344 the chain is Lumenal. Residues valine 2345–leucine 2365 traverse the membrane as a helical segment. Residues methionine 2366–proline 2375 are Cytoplasmic-facing. Residues leucine 2376 to leucine 2396 traverse the membrane as a helical segment. At glutamine 2397–glutamine 2441 the chain is on the lumenal side. The chain crosses the membrane as a helical span at residues valine 2442–glycine 2462. Topologically, residues glutamate 2463 to leucine 3423 are cytoplasmic. The region spanning glycine 2521–alanine 2785 is the mRNA cap 0-1 NS5-type MT domain. A GTP-binding site is contributed by lysine 2533–methionine 2539. S-adenosyl-L-methionine is bound at residue serine 2576. Position 2576 is a phosphoserine (serine 2576). Lysine 2581 functions as the For 2'-O-MTase activity in the catalytic mechanism. Residues valine 2597–leucine 2600 are SUMO-interacting motif (SIM). The S-adenosyl-L-methionine site is built by glycine 2606, tryptophan 2607, threonine 2624, lysine 2625, histidine 2630, glutamate 2631, aspartate 2651, valine 2652, aspartate 2666, and isoleucine 2667. The active-site For 2'-O-MTase activity is the aspartate 2666. Glutamate 2669 to glutamate 2675 lines the GTP pocket. Catalysis depends on lysine 2702, which acts as the For 2'-O-MTase activity. Arginine 2733–serine 2735 contacts GTP. Residue glutamate 2738 is the For 2'-O-MTase activity of the active site. Tyrosine 2740 contacts S-adenosyl-L-methionine. The short motif at lysine 2908 to valine 2914 is the Nuclear localization signal (NLS) element. The Zn(2+) site is built by glutamate 2959, histidine 2963, cysteine 2968, and cysteine 2971. In terms of domain architecture, RdRp catalytic spans glycine 3049–alanine 3199. The Zn(2+) site is built by histidine 3234, cysteine 3250, and cysteine 3369.

It in the N-terminal section; belongs to the class I-like SAM-binding methyltransferase superfamily. mRNA cap 0-1 NS5-type methyltransferase family. In terms of assembly, homodimer. Interacts with host SERTAD3; this interaction promotes capsid protein C degradation. Interacts with host CAPRIN1; this interaction is probably linked to the inhibition of stress granules formation by the virus. Interacts with host G3BP1; this interaction is probably linked to the inhibition of stress granules formation by the virus. Forms heterodimers with envelope protein E in the endoplasmic reticulum and Golgi. Interacts with non-structural protein 2A. As to quaternary structure, homodimer; in the endoplasmic reticulum and Golgi. Interacts with host TYRO3, AXL and DC-SIGN proteins. Interacts with non-structural protein 2A. Interacts with host HAVCR1; this interaction likely mediates virus attachment to host cell. Interacts with host NCAM1. Interacts with host HSPA5. Interacts with Aedes aegypti SRPN25, APY and venom allergen-1 salivary proteins; the interactions do not affect Zika virus replication in human endothelial cells and keratinocytes. In terms of assembly, homodimer; Homohexamer when secreted. Interacts with host TBK1. Interacts with host USP8. Interacts with envelope protein E. Interacts with the structural protein prM/E complex, and the NS2B/NS3 protease complex. As to quaternary structure, forms a heterodimer with serine protease NS3. May form homooligomers. Interacts with human SPCS1. Interacts with non-structural protein 2A. In terms of assembly, forms a heterodimer with NS2B. Interacts with NS4B. Interacts with unphosphorylated RNA-directed RNA polymerase NS5; this interaction stimulates RNA-directed RNA polymerase NS5 guanylyltransferase activity. Interacts with non-structural protein 2A. Interacts with host SHFL; this interaction promotes NS3 degradation via a lysosome-dependent pathway. Interacts with host CEP63; this interaction disorganizes the centrosome and inhibits host innate immune response. May interact with host ANKLE2; the interaction may cause defects in brain development, such as microcephaly. May interact with host SRPRA and SEC61G. As to quaternary structure, interacts with serine protease NS3. Interacts with NS1. In terms of assembly, homodimer; dimerization may negatively regulate the GTase activity, a crucial step in the capping process. Interacts with host STAT2; this interaction inhibits the phosphorylation of the latter, and, when all viral proteins are present (polyprotein), targets STAT2 for degradation. Interacts with host TBK1 and IKBKE; these interactions lead to the inhibition of the host RIG-I signaling pathway. Interacts with host PAF1 complex; the interaction may prevent the recruitment of the host PAF1 complex to interferon-responsive genes, and thus reduces the immune response. Interacts with serine protease NS3. Interacts with host KPNA2. Interacts with host ZSWIM8; this interaction allows STAT2 binding to ZSWIM8 and subsequent proteasomal degradation leading to inhibition of interferon signaling. In terms of processing, specific enzymatic cleavages in vivo yield mature proteins. Cleavages in the lumen of endoplasmic reticulum are performed by host signal peptidase, whereas cleavages in the cytoplasmic side are performed by serine protease NS3. Signal cleavage at the 2K-4B site requires a prior NS3 protease-mediated cleavage at the 4A-2K site. Cleaved in post-Golgi vesicles by a host furin, releasing the mature small envelope protein M, and peptide pr. This cleavage is incomplete as up to 30% of viral particles still carry uncleaved prM. Post-translationally, N-glycosylation plays a role in virulence in mammalian and mosquito hosts, but may have no effect on neurovirulence. In terms of processing, ubiquitination by host TRIM7 promotes virus attachment and fusion of the virus and the host endosome membrane. N-glycosylated. The excreted form is glycosylated, which is required for efficient secretion of the protein from infected cells. Post-translationally, ubiquitination by host TRIM22 leads to proteasomal degradation. In terms of processing, acetylated by host KAT5. Acetylation modulates NS3 RNA-binding and unwinding activities and plays an important positive role for viral replication. Phosphorylated on serines residues. This phosphorylation may trigger NS5 nuclear localization. Post-translationally, sumoylated, required for regulating IFN induced interferon stimulated genes/ISGs.

Its subcellular location is the virion. It is found in the host nucleus. It localises to the host cytoplasm. The protein localises to the host perinuclear region. The protein resides in the secreted. Its subcellular location is the virion membrane. It is found in the host endoplasmic reticulum membrane. It carries out the reaction a 5'-end (5'-triphosphoguanosine)-ribonucleoside in mRNA + S-adenosyl-L-methionine = a 5'-end (N(7)-methyl 5'-triphosphoguanosine)-ribonucleoside in mRNA + S-adenosyl-L-homocysteine. The catalysed reaction is a 5'-end (N(7)-methyl 5'-triphosphoguanosine)-ribonucleoside in mRNA + S-adenosyl-L-methionine = a 5'-end (N(7)-methyl 5'-triphosphoguanosine)-(2'-O-methyl-ribonucleoside) in mRNA + S-adenosyl-L-homocysteine + H(+). It catalyses the reaction RNA(n) + a ribonucleoside 5'-triphosphate = RNA(n+1) + diphosphate. The enzyme catalyses Selective hydrolysis of -Xaa-Xaa-|-Yaa- bonds in which each of the Xaa can be either Arg or Lys and Yaa can be either Ser or Ala.. It carries out the reaction a ribonucleoside 5'-triphosphate + H2O = a ribonucleoside 5'-diphosphate + phosphate + H(+). The catalysed reaction is ATP + H2O = ADP + phosphate + H(+). In terms of biological role, plays a role in virus budding by binding to the cell membrane and gathering the viral RNA into a nucleocapsid that forms the core of the mature virus particle. During virus entry, may induce genome penetration into the host cytoplasm after hemifusion induced by the surface proteins. Can migrate to the cell nucleus where it modulates host functions. Inhibits the integrated stress response (ISR) in the infected cell. Functionally, inhibits RNA silencing by interfering with host Dicer. Its function is as follows. Prevents premature fusion activity of envelope proteins in trans-Golgi by binding to envelope protein E at pH 6.0. After virion release in extracellular space, gets dissociated from E dimers. Plays a role in host immune defense modulation and protection of envelope protein E during virion synthesis. PrM-E cleavage is inefficient, many virions are only partially matured and immature prM-E proteins could play a role in immune evasion. Contributes to fetal microcephaly in humans. Acts as a chaperone for envelope protein E during intracellular virion assembly by masking and inactivating envelope protein E fusion peptide. prM is the only viral peptide matured by host furin in the trans-Golgi network probably to avoid catastrophic activation of the viral fusion activity in acidic Golgi compartment prior to virion release. In terms of biological role, may play a role in virus budding. Exerts cytotoxic effects by activating a mitochondrial apoptotic pathway through M ectodomain. May display a viroporin activity. Functionally, binds to host cell surface receptors and mediates fusion between viral and cellular membranes. Efficient virus attachment to cell is, at least in part, mediated by host HAVCR1 in a cell-type specific manner. In addition, host NCAM1 can also be used as entry receptor. Interaction with host HSPA5 plays an important role in the early stages of infection as well. Envelope protein is synthesized in the endoplasmic reticulum and forms a heterodimer with protein prM. The heterodimer plays a role in virion budding in the ER, and the newly formed immature particle is covered with 60 spikes composed of heterodimers between precursor prM and envelope protein E. The virion is transported to the Golgi apparatus where the low pH causes the dissociation of PrM-E heterodimers and formation of E homodimers. PrM-E cleavage is inefficient, many virions are only partially matured and immature prM-E proteins could play a role in immune evasion. Its function is as follows. Plays a role in the inhibition of host RLR-induced interferon-beta activation by targeting TANK-binding kinase 1/TBK1. In addition, recruits the host deubiquitinase USP8 to cleave 'Lys-11'-linked polyubiquitin chains from caspase-1/CASP1 thus inhibiting its proteasomal degradation. In turn, stabilized CASP1 promotes cleavage of cGAS, which inhibits its ability to recognize mitochondrial DNA release and initiate type I interferon signaling. Component of the viral RNA replication complex that recruits genomic RNA, the structural protein prM/E complex, and the NS2B/NS3 protease complex to the virion assembly site and orchestrates virus morphogenesis. Antagonizes also the host MDA5-mediated induction of alpha/beta interferon antiviral response. May disrupt adherens junction formation and thereby impair proliferation of radial cells in the host cortex. In terms of biological role, required cofactor for the serine protease function of NS3. Functionally, displays three enzymatic activities: serine protease, NTPase and RNA helicase. NS3 serine protease, in association with NS2B, performs its autocleavage and cleaves the polyprotein at dibasic sites in the cytoplasm: C-prM, NS2A-NS2B, NS2B-NS3, NS3-NS4A, NS4A-2K and NS4B-NS5. NS3 RNA helicase binds RNA and unwinds dsRNA in the 3' to 5' direction. Inhibits the integrated stress response (ISR) in the infected cell by blocking stress granules assembly. Disrupts host centrosome organization in a CEP63-dependent manner to degrade host TBK1 and inhibits innate immune response. Its function is as follows. Regulates the ATPase activity of the NS3 helicase activity. NS4A allows NS3 helicase to conserve energy during unwinding. Cooperatively with NS4B suppresses the Akt-mTOR pathway and leads to cellular dysregulation. By inhibiting host ANKLE2 functions, may cause defects in brain development, such as microcephaly. Also antagonizes the host MDA5-mediated induction of alpha/beta interferon antiviral response. Inhibits the integrated stress response (ISR) in the infected cell by blocking stress granules assembly. Functions as a signal peptide for NS4B and is required for the interferon antagonism activity of the latter. In terms of biological role, induces the formation of ER-derived membrane vesicles where the viral replication takes place. Also plays a role in the inhibition of host RLR-induced interferon-beta production at TANK-binding kinase 1/TBK1 level. Cooperatively with NS4A suppresses the Akt-mTOR pathway and leads to cellular dysregulation. Functionally, replicates the viral (+) and (-) RNA genome, and performs the capping of genomes in the cytoplasm. Methylates viral RNA cap at guanine N-7 and ribose 2'-O positions. Once sufficient NS5 is expressed, binds to the cap-proximal structure and inhibits further translation of the viral genome. Besides its role in RNA genome replication, also prevents the establishment of a cellular antiviral state by blocking the interferon-alpha/beta (IFN-alpha/beta) signaling pathway. Mechanistically, interferes with host kinases TBK1 and IKKE upstream of interferon regulatory factor 3/IRF3 to inhibit the RIG-I pathway. Also antagonizes type I interferon signaling by targeting STAT2 for degradation by the proteasome thereby preventing activation of JAK-STAT signaling pathway. Mechanistically, acts as a scaffold protein to connect host ZSWIM8/CUL3 ligase complex and STAT2, leading to STAT2 degradation. Within the host nucleus, disrupts host SUMO1 and STAT2 co-localization with PML, resulting in PML degradation. May also reduce immune responses by preventing the recruitment of the host PAF1 complex to interferon-responsive genes. The sequence is that of Genome polyprotein from Zika virus (isolate ZIKV/Human/French Polynesia/10087PF/2013) (ZIKV).